A 710-amino-acid polypeptide reads, in one-letter code: MDQTEEPPLNTHQQHPEEVEHHENGATKMFRKVKARAKKFKNSLTKHGQSNEHEQDHDLVEEDDDDDELEPEVIDAPGVTGKPRETNVPASEEIIPPGTKVFPVVSSDYTKPTESVPVQEASYGHDAPAHSVRTTFTSDKEEKRDVPIHHPLSELSDREESRETHHESLNTPVSLLSGTEDVTSTFAPSGDDEYLDGQRKVNVETPITLEEESAVSDYLSGVSNYQSKVTDPTKEETGGVPEIAESFGNMEVTDESPDQKPGQFERDLSTRSKEFKEFDQDFDSVLGKDSPAKFPGESGVVFPVGFGDESGAELEKDFPTRSHDFDMKTETGMDTNSPSRSHEFDLKTESGNDKNSPMGFGSESGAELEKEFDQKNDSGRNEYSPESDGGLGAPLGGNFPVRSHELDLKNESDIDKDVPTGFDGEPDFLAKGRPGYGEASEEDKFPARSDDVEVETELGRDPKTETLDQFSPELSHPKERDEFKESRDDFEETRDEKTEEPKQSTYTEKFASMLGYSGEIPVGDQTQVAGTVDEKLTPVNEKDQETESAVTTKLPISGGGSGVEEQRGEDKSVSGRDYVAEKLTTEEEDKAFSDMVAEKLQIGGEEEKKETTTKEVEKISTEKAASEEGEAVEEEVKGGGGMVGRIKGWFGGGATDEVKPESPHSVEEAPKSSGWFGGGATEEVKPKSPHSVEESPQSLGSTVVPVQKEL.

Disordered regions lie at residues 1–198 (MDQT…LDGQ), 225–269 (YQSK…RDLS), and 305–507 (GFGD…STYT). Residues 14 to 25 (QHPEEVEHHENG) show a composition bias toward basic and acidic residues. Positions 29–41 (MFRKVKARAKKFK) are enriched in basic residues. The span at 49–58 (QSNEHEQDHD) shows a compositional bias: basic and acidic residues. The span at 59–73 (LVEEDDDDDELEPEV) shows a compositional bias: acidic residues. Positions 138–168 (SDKEEKRDVPIHHPLSELSDREESRETHHES) are enriched in basic and acidic residues. Over residues 169 to 187 (LNTPVSLLSGTEDVTSTFA) the composition is skewed to polar residues. 5 repeat units span residues 303 to 316 (PVGFGDESGAELEK), 317 to 331 (DFPTRSHDFDMKTET), 336 to 350 (NSPSRSHEFDLKTES), 357 to 370 (PMGFGSESGAELEK), and 398 to 412 (NFPVRSHELDLKNES). Positions 303 to 370 (PVGFGDESGA…GSESGAELEK (68 aa)) are 2 X 14 AA repeats of P-[MV]-G-F-G-[DS]-E-S-G-A-E-L-E-K. Composition is skewed to basic and acidic residues over residues 313–331 (ELEKDFPTRSHDFDMKTET), 340–352 (RSHEFDLKTESGN), 367–380 (ELEKEFDQKNDSGR), 402–418 (RSHELDLKNESDIDKDV), 442–466 (EDKFPARSDDVEVETELGRDPKTET), and 475–487 (SHPKERDEFKESR). A 3 X 15 AA repeats of [DN]-[FS]-P-[STV]-R-S-H-[DE]-[FL]-D-[LM]-K-[NT]-E-[ST] region spans residues 317–412 (DFPTRSHDFD…SHELDLKNES (96 aa)). Tandem repeats lie at residues 510-514 (FASML), 532-536 (VDEKL), and 550-554 (VTTKL). The segment at 510–600 (FASMLGYSGE…AFSDMVAEKL (91 aa)) is 5 X 5 AA repeats of [FV]-[ADT]-[EST]-[KM]-L. The tract at residues 537 to 577 (TPVNEKDQETESAVTTKLPISGGGSGVEEQRGEDKSVSGRD) is disordered. Over residues 564–577 (EEQRGEDKSVSGRD) the composition is skewed to basic and acidic residues. 2 repeat units span residues 579–583 (VAEKL) and 596–600 (VAEKL). The segment at 601–710 (QIGGEEEKKE…STVVPVQKEL (110 aa)) is disordered. Positions 605–626 (EEEKKETTTKEVEKISTEKAAS) are enriched in basic and acidic residues. Phosphoserine is present on S626. A compositionally biased stretch (gly residues) spans 638-654 (GGGGMVGRIKGWFGGGA). A run of 2 repeats spans residues 648 to 670 (GWFGGGATDEVKPESPHSVEEAP) and 674 to 696 (GWFGGGATEEVKPKSPHSVEESP). The tract at residues 648-696 (GWFGGGATDEVKPESPHSVEEAPKSSGWFGGGATEEVKPKSPHSVEESP) is 2 X 23 AA repeats. 2 stretches are compositionally biased toward basic and acidic residues: residues 656–670 (DEVKPESPHSVEEAP) and 682–693 (EEVKPKSPHSVE).

This sequence belongs to the LTI78/LTI65 family. As to expression, accumulates rapidly in leaves, stems, roots, flower petals, filaments, and sepals during cold-acclimation.

Its subcellular location is the cytoplasm. Its function is as follows. Involved in responses to abiotic stresses. Regulates probably root elongation in cold conditions. The chain is Low-temperature-induced 78 kDa protein from Arabidopsis thaliana (Mouse-ear cress).